The sequence spans 436 residues: Trigger factor (436 aa).

The 86-residue stretch at 163–248 (GDQVIIDFVG…VHSVQTKVLP (86 aa)) folds into the PPIase FKBP-type domain.

The protein belongs to the FKBP-type PPIase family. Tig subfamily.

Its subcellular location is the cytoplasm. The catalysed reaction is [protein]-peptidylproline (omega=180) = [protein]-peptidylproline (omega=0). In terms of biological role, involved in protein export. Acts as a chaperone by maintaining the newly synthesized protein in an open conformation. Functions as a peptidyl-prolyl cis-trans isomerase. The chain is Trigger factor from Hydrogenovibrio crunogenus (strain DSM 25203 / XCL-2) (Thiomicrospira crunogena).